The sequence spans 376 residues: Chaperone protein DnaJ (376 aa).

The J domain occupies 5–70 (DYYEVLGVGR…DKKAAYDQFG (66 aa)). The segment at 132-210 (GLTKELRIPT…CHGEGRVEKS (79 aa)) adopts a CR-type zinc-finger fold. Residues Cys145, Cys148, Cys162, Cys165, Cys184, Cys187, Cys198, and Cys201 each coordinate Zn(2+). 4 CXXCXGXG motif repeats span residues 145-152 (CDLCDGSG), 162-169 (CGTCHGQG), 184-191 (CPTCHGRG), and 198-205 (CGKCHGEG).

The protein belongs to the DnaJ family. Homodimer. It depends on Zn(2+) as a cofactor.

Its subcellular location is the cytoplasm. In terms of biological role, participates actively in the response to hyperosmotic and heat shock by preventing the aggregation of stress-denatured proteins and by disaggregating proteins, also in an autonomous, DnaK-independent fashion. Unfolded proteins bind initially to DnaJ; upon interaction with the DnaJ-bound protein, DnaK hydrolyzes its bound ATP, resulting in the formation of a stable complex. GrpE releases ADP from DnaK; ATP binding to DnaK triggers the release of the substrate protein, thus completing the reaction cycle. Several rounds of ATP-dependent interactions between DnaJ, DnaK and GrpE are required for fully efficient folding. Also involved, together with DnaK and GrpE, in the DNA replication of plasmids through activation of initiation proteins. The sequence is that of Chaperone protein DnaJ from Shewanella loihica (strain ATCC BAA-1088 / PV-4).